Reading from the N-terminus, the 320-residue chain is Biotin synthase (320 aa).

The 230-residue stretch at 46–275 folds into the Radical SAM core domain; the sequence is NMGRRVDLCS…YAHIRYAGGR (230 aa). [4Fe-4S] cluster contacts are provided by C64, C68, and C71. The [2Fe-2S] cluster site is built by S108, C140, C200, and R270.

This sequence belongs to the radical SAM superfamily. Biotin synthase family. As to quaternary structure, homodimer. The cofactor is [4Fe-4S] cluster. [2Fe-2S] cluster is required as a cofactor.

It catalyses the reaction (4R,5S)-dethiobiotin + (sulfur carrier)-SH + 2 reduced [2Fe-2S]-[ferredoxin] + 2 S-adenosyl-L-methionine = (sulfur carrier)-H + biotin + 2 5'-deoxyadenosine + 2 L-methionine + 2 oxidized [2Fe-2S]-[ferredoxin]. It participates in cofactor biosynthesis; biotin biosynthesis; biotin from 7,8-diaminononanoate: step 2/2. In terms of biological role, catalyzes the conversion of dethiobiotin (DTB) to biotin by the insertion of a sulfur atom into dethiobiotin via a radical-based mechanism. The chain is Biotin synthase from Acetivibrio thermocellus (strain ATCC 27405 / DSM 1237 / JCM 9322 / NBRC 103400 / NCIMB 10682 / NRRL B-4536 / VPI 7372) (Clostridium thermocellum).